The sequence spans 231 residues: Putative carboxymethylenebutenolidase (231 aa).

Active-site residues include Cys118, Asp167, and His199.

Belongs to the dienelactone hydrolase family.

The enzyme catalyses 2-(5-oxo-2,5-dihydrofuran-2-ylidene)acetate + H2O = 4-oxohex-2-enedioate + H(+). This is Putative carboxymethylenebutenolidase from Aquifex aeolicus (strain VF5).